Consider the following 335-residue polypeptide: Glyceraldehyde-3-phosphate dehydrogenase 2 (335 aa).

NAD(+) is bound by residues 13-14 (RI), Asp34, and Met79. D-glyceraldehyde 3-phosphate-binding positions include 151-153 (SCT), Thr182, 211-212 (TG), and Arg234. Catalysis depends on Cys152, which acts as the Nucleophile. Residue Asn316 participates in NAD(+) binding.

Belongs to the glyceraldehyde-3-phosphate dehydrogenase family. In terms of assembly, homotetramer.

The protein resides in the cytoplasm. It catalyses the reaction D-glyceraldehyde 3-phosphate + phosphate + NAD(+) = (2R)-3-phospho-glyceroyl phosphate + NADH + H(+). The protein operates within carbohydrate degradation; glycolysis; pyruvate from D-glyceraldehyde 3-phosphate: step 1/5. Functionally, glyceraldehyde-3-phosphate dehydrogenase is a key enzyme in glycolysis that catalyzes the first step of the pathway by converting D-glyceraldehyde 3-phosphate (G3P) into 3-phospho-D-glyceroyl phosphate. The protein is Glyceraldehyde-3-phosphate dehydrogenase 2 (gapdh-2) of Danio rerio (Zebrafish).